Consider the following 96-residue polypeptide: Co-chaperonin GroES (96 aa).

It belongs to the GroES chaperonin family. In terms of assembly, heptamer of 7 subunits arranged in a ring. Interacts with the chaperonin GroEL.

Its subcellular location is the cytoplasm. Its function is as follows. Together with the chaperonin GroEL, plays an essential role in assisting protein folding. The GroEL-GroES system forms a nano-cage that allows encapsulation of the non-native substrate proteins and provides a physical environment optimized to promote and accelerate protein folding. GroES binds to the apical surface of the GroEL ring, thereby capping the opening of the GroEL channel. This chain is Co-chaperonin GroES, found in Geobacter sp. (strain M21).